The primary structure comprises 246 residues: Mast cell protease 1 (246 aa).

The N-terminal stretch at 1 to 18 (MQALLFLMALLLPSGAGA) is a signal peptide. A propeptide spans 19–20 (EE) (activation peptide). The Peptidase S1 domain occupies 21-244 (IIGGVEARPH…YVPWIKTVIN (224 aa)). A disulfide bridge links C50 with C66. The active-site Charge relay system is H65. N102 is a glycosylation site (N-linked (GlcNAc...) asparagine). The active-site Charge relay system is D109. 2 cysteine pairs are disulfide-bonded: C143–C208 and C174–C187. The active-site Charge relay system is the S202.

It belongs to the peptidase S1 family. Granzyme subfamily. As to expression, mucosal mast cells.

The protein resides in the secreted. It is found in the cytoplasmic granule. Has a chymotrypsin-like activity. This chain is Mast cell protease 1 (Mcpt1), found in Mus musculus (Mouse).